Consider the following 303-residue polypeptide: Porphobilinogen deaminase (303 aa).

Cys240 bears the S-(dipyrrolylmethanemethyl)cysteine mark.

Belongs to the HMBS family. As to quaternary structure, monomer. It depends on dipyrromethane as a cofactor.

The catalysed reaction is 4 porphobilinogen + H2O = hydroxymethylbilane + 4 NH4(+). Its pathway is porphyrin-containing compound metabolism; protoporphyrin-IX biosynthesis; coproporphyrinogen-III from 5-aminolevulinate: step 2/4. Tetrapolymerization of the monopyrrole PBG into the hydroxymethylbilane pre-uroporphyrinogen in several discrete steps. This is Porphobilinogen deaminase from Stenotrophomonas maltophilia (strain R551-3).